The following is a 594-amino-acid chain: Actin-histidine N-methyltransferase (594 aa).

The disordered stretch occupies residues 1-22; that stretch reads MGKKSRVKTQKSGTGATATVSP. Polar residues predominate over residues 10 to 20; sequence QKSGTGATATV. Residues arginine 75, 104–106, arginine 254, 275–279, and 325–327 each bind S-adenosyl-L-methionine; these read EGF, DMCNH, and SGF. The SET domain occupies 94–314; that stretch reads EGFEMVNFKE…AGDQIYIFYG (221 aa). Residues 551 to 594 form a disordered region; that stretch reads GLVNGENLIPNGTRSENESLSPEESENVTGEESSGSMAKVKERL.

Belongs to the class V-like SAM-binding methyltransferase superfamily. SETD3 actin-histidine methyltransferase family. In terms of assembly, interacts with MYOD1. Post-translationally, phosphorylated by GSK3B, which is required for recognition by the SCF(FBXW7) complex and subsequent degradation. In terms of processing, ubiquitinated by the SCF(FBXW7) complex following phosphorylation by GSK3B, leading to its degradation by the proteasome. In terms of tissue distribution, prominently expressed in the heart and skeletal muscles and is also detected weakly in the stomach, small intestine, and colon.

Its subcellular location is the cytoplasm. The protein resides in the nucleus. The catalysed reaction is L-histidyl-[protein] + S-adenosyl-L-methionine = N(tele)-methyl-L-histidyl-[protein] + S-adenosyl-L-homocysteine + H(+). Its function is as follows. Protein-histidine N-methyltransferase that specifically mediates 3-methylhistidine (tele-methylhistidine) methylation of actin at 'His-73'. Histidine methylation of actin is required for smooth muscle contraction of the laboring uterus during delivery. Does not have protein-lysine N-methyltransferase activity and probably only catalyzes histidine methylation of actin. This Mus musculus (Mouse) protein is Actin-histidine N-methyltransferase.